An 872-amino-acid polypeptide reads, in one-letter code: Alanine--tRNA ligase (872 aa).

His571, His575, Cys674, and His678 together coordinate Zn(2+).

Belongs to the class-II aminoacyl-tRNA synthetase family. Zn(2+) is required as a cofactor.

Its subcellular location is the cytoplasm. It catalyses the reaction tRNA(Ala) + L-alanine + ATP = L-alanyl-tRNA(Ala) + AMP + diphosphate. In terms of biological role, catalyzes the attachment of alanine to tRNA(Ala) in a two-step reaction: alanine is first activated by ATP to form Ala-AMP and then transferred to the acceptor end of tRNA(Ala). Also edits incorrectly charged Ser-tRNA(Ala) and Gly-tRNA(Ala) via its editing domain. The sequence is that of Alanine--tRNA ligase from Symbiobacterium thermophilum (strain DSM 24528 / JCM 14929 / IAM 14863 / T).